Here is a 545-residue protein sequence, read N- to C-terminus: RAN GTPase-activating protein 2 (545 aa).

Residues 1–116 (MADILDSRPH…VAARELISED (116 aa)) are WPP. LRR repeat units follow at residues 213–236 (GSIL…AFGA), 241–264 (LSSL…AVSE), 269–296 (TENL…VVKR), 325–348 (CTHM…SLSK), 353–380 (FKHM…ALKE), 382–405 (ASPI…AIAA), 410–433 (KQDL…QIAN), 439–462 (HSKL…ALAH), and 467–494 (KEAF…IFKK). The tract at residues 496-545 (PELLGALDENDPDGEEDDDDEEDEEDEENEGNGNGELESKLKNLEVNQED) is disordered. A compositionally biased stretch (acidic residues) spans 503 to 525 (DENDPDGEEDDDDEEDEEDEENE).

This sequence belongs to the RNA1 family. As to quaternary structure, homodimer. Interacts with WIP1 and WIP2 through its WPP domain. Component of Ran complexes at least composed of WIT1 or WIT2, RANGAP1 or RANGAP2, and WIP1 or WIP2 or WIP3. Interacts with WIT1.

Its subcellular location is the cytoplasm. It is found in the nucleus membrane. The protein localises to the cytoskeleton. The protein resides in the spindle. It localises to the phragmoplast. Its function is as follows. GTPase activator for the nuclear Ras-related regulatory protein Ran, converting it to the putatively inactive GDP-bound state. This is RAN GTPase-activating protein 2 (RANGAP2) from Arabidopsis thaliana (Mouse-ear cress).